The following is a 2851-amino-acid chain: Highly reducing polyketide synthase sthA (2851 aa).

Residues 8–415 (NEPIVIIGSG…GTNAHAIVEG (408 aa)) enclose the Ketosynthase family 3 (KS3) domain. The tract at residues 304-324 (LDPESPNDRPQYIESHGTGTP) is disordered. The interval 529–851 (IFTGQGAQYA…PYHGSLVRGE (323 aa)) is acyl transferase (AT) domain. The interval 926-1059 (HQLLGNVSPD…GELNILLVDD (134 aa)) is N-terminal hotdog fold. One can recognise a PKS/mFAS DH domain in the interval 926–1235 (HQLLGNVSPD…FKPVGSDAKD (310 aa)). The dehydratase (DH) domain stretch occupies residues 949–1242 (PKEMTWLEGH…AKDDRNVFYK (294 aa)). The Proton acceptor; for dehydratase activity role is filled by His-958. The C-terminal hotdog fold stretch occupies residues 1076-1235 (MIPVQPSRLY…FKPVGSDAKD (160 aa)). Asp-1137 (proton donor; for dehydratase activity) is an active-site residue. Residues 1390–1577 (QCTLWVAGVL…GIDTMSPPEL (188 aa)) are methyltransferase (MT) domain. The segment at 2079-2252 (TYWLVGLSGA…RSSVVNVGAI (174 aa)) is ketoreductase (KR)domain. The region spanning 2360 to 2443 (ADITKVVQQA…DLAAESIPAE (84 aa)) is the Carrier domain. Position 2399 is an O-(pantetheine 4'-phosphoryl)serine (Ser-2399). The interval 2447–2496 (HVQQQQQQAGRQDASSNTSSDDETASTLPTSPESASPGTSTPVPEKDISP) is disordered. Over residues 2455 to 2488 (AGRQDASSNTSSDDETASTLPTSPESASPGTSTP) the composition is skewed to polar residues. The interval 2535-2767 (LTGCSGLLGH…DLVSVDTCCS (233 aa)) is reductase (R) domain.

Pantetheine 4'-phosphate serves as cofactor.

It carries out the reaction 7 malonyl-CoA + acetyl-CoA + 10 AH2 + 5 S-adenosyl-L-methionine + 2 H(+) = dehydroprobetaenone I + 10 A + 5 S-adenosyl-L-homocysteine + 7 CO2 + 8 CoA + 6 H2O. The protein operates within mycotoxin biosynthesis. In terms of biological role, highly reducing polyketide synthase; part of the gene cluster that mediates the biosynthesis of the phytotoxin stemphyloxin II. The first step of the pathway is the synthesis of dehydroprobetaenone I by the polyketide synthase sthA and the enoyl reductase sthE via condensation of one acetyl-CoA starter unit with 7 malonyl-CoA units and 5 methylations. The C-terminal reductase (R) domain of sthA catalyzes the reductive release of the polyketide chain. Because sthA lacks a designated enoylreductase (ER) domain, the required activity is provided the enoyl reductase sthE. The short-chain dehydrogenase/reductase sthC then catalyzes reduction of dehydroprobetaenone I to probetaenone I. The cytochrome P450 monooxygenase sthF catalyzes successive epoxidation, oxidation (resulting from epoxide opening) and hydroxylation to install a tertiary alcohol in the decaline ring to yield betaenone C from dehydroprobetaenone I and betaenone B from probetaenone I. The FAD-linked oxidoreductase sthB is responsible for the conversion of betaenone C to betaenone A via an intramolecular aldol reaction between C-1 and C-17 to form the bridged tricyclic system in betaenone A. Finally, the cytochrome P450 monooxygenase sthD catalyzes the hydroxylation of C-15 to afford the final metabolite stemphyloxin II. The protein is Highly reducing polyketide synthase sthA of Phaeosphaeria nodorum (strain SN15 / ATCC MYA-4574 / FGSC 10173) (Glume blotch fungus).